Reading from the N-terminus, the 292-residue chain is Shikimate dehydrogenase (NADP(+)) (292 aa).

Shikimate is bound by residues 25–27 (SKS) and Thr72. Catalysis depends on Lys76, which acts as the Proton acceptor. Shikimate contacts are provided by Asn97 and Asp113. Residues 137–141 (GAGGA), 161–166 (NRTQSK), and Met230 each bind NADP(+). Tyr232 provides a ligand contact to shikimate. Gly254 lines the NADP(+) pocket.

Belongs to the shikimate dehydrogenase family. Homodimer.

The enzyme catalyses shikimate + NADP(+) = 3-dehydroshikimate + NADPH + H(+). Its pathway is metabolic intermediate biosynthesis; chorismate biosynthesis; chorismate from D-erythrose 4-phosphate and phosphoenolpyruvate: step 4/7. In terms of biological role, involved in the biosynthesis of the chorismate, which leads to the biosynthesis of aromatic amino acids. Catalyzes the reversible NADPH linked reduction of 3-dehydroshikimate (DHSA) to yield shikimate (SA). The polypeptide is Shikimate dehydrogenase (NADP(+)) (Shewanella sp. (strain MR-4)).